Consider the following 965-residue polypeptide: Vacuolar membrane protease (965 aa).

At 1–16 the chain is on the cytoplasmic side; the sequence is MARPSLSPSNPLGFTP. The chain crosses the membrane as a helical span at residues 17-37; the sequence is WPVTVITAVVYLALVVPLLVV. The Vacuolar segment spans residues 38 to 387; the sequence is HHVVPSAPSS…SAFVVFELHT (350 aa). Residues Asn53 and Asn119 are each glycosylated (N-linked (GlcNAc...) asparagine). His171 and Asp183 together coordinate Zn(2+). Glu217 acts as the Proton acceptor in catalysis. Residues Glu218, Glu243, and His316 each contribute to the Zn(2+) site. A helical transmembrane segment spans residues 388-408; the sequence is LFALSVTLLVVAPLVLLVTSI. Topologically, residues 409–441 are cytoplasmic; that stretch reads ALARADKMYLFRSSASPEDSDGSEVVPLHGVRG. Residues 442–462 traverse the membrane as a helical segment; that stretch reads FFRFPFLLVIPTAVTVGLAYL. The Vacuolar portion of the chain corresponds to 463–472; the sequence is VTKFNPYIIH. The chain crosses the membrane as a helical span at residues 473–493; that stretch reads SSEYAVWSMMISAWVFLAWFV. The Cytoplasmic portion of the chain corresponds to 494–507; that stretch reads SRVADFARPSAFHR. The chain crosses the membrane as a helical span at residues 508 to 528; the sequence is VYTLTWLFLVEWVFLVISTVY. The Vacuolar portion of the chain corresponds to 529–532; that stretch reads ENQY. A helical membrane pass occupies residues 533–553; that stretch reads GLAGGYFVLFVFAGTFLATWI. Residues 554-661 lie on the Cytoplasmic side of the membrane; that stretch reads SYLELFALPR…WSIHLPKWVW (108 aa). A disordered region spans residues 577–610; it reads RTSSHGSRLGTASGEDVEDGEDEDDDGTTAEATE. The span at 591–604 shows a compositional bias: acidic residues; it reads EDVEDGEDEDDDGT. The helical transmembrane segment at 662–682 threads the bilayer; that stretch reads VLQFLLTAPLVLIFVGPLALL. Over 683-698 the chain is Vacuolar; the sequence is LTSALRQTGQDGSPSL. The chain crosses the membrane as a helical span at residues 699-719; sequence FIYIAVAALTTLLFIPLLPFI. The Cytoplasmic segment spans residues 720-725; it reads HRYTHH. Residues 726-746 form a helical membrane-spanning segment; the sequence is IPLFLLCVFAGTLIYNLVAFP. The Vacuolar segment spans residues 747–965; it reads FSPANRLKLF…LVEGSRRFEV (219 aa). Residues Asn793 and Asn830 are each glycosylated (N-linked (GlcNAc...) asparagine).

Belongs to the peptidase M28 family. It depends on Zn(2+) as a cofactor.

It localises to the vacuole membrane. Functionally, may be involved in vacuolar sorting and osmoregulation. The protein is Vacuolar membrane protease of Aspergillus fumigatus (strain CBS 144.89 / FGSC A1163 / CEA10) (Neosartorya fumigata).